Reading from the N-terminus, the 1585-residue chain is Sterol 3-beta-glucosyltransferase (1585 aa).

Pro residues predominate over residues 1 to 18; sequence MSPPISPTPPPLQPPFPP. Disordered stretches follow at residues 1–151, 177–225, and 249–279; these read MSPP…ESSF, PWEE…PTHT, and YQYA…LPKG. Composition is skewed to polar residues over residues 65–92, 105–123, and 132–148; these read DQAT…NAIT, DAQT…STHE, and PRTS…QMAE. Acidic residues predominate over residues 178–194; it reads WEEDDDSDDGEDDDEFI. Residues 255–273 show a composition bias toward low complexity; sequence ETSSRRTSAAGSESSSEGE. Residues 387 to 555 enclose the GRAM 1 domain; the sequence is ERLMEVFGLE…EAIVDVEKSP (169 aa). Residues 438–530 form the PH domain; the sequence is LLVKSGPLHK…WVKAIQKVMF (93 aa). Disordered regions lie at residues 625–645 and 666–852; these read TSHA…LGMA and DGEP…GSES. Basic and acidic residues predominate over residues 670-689; the sequence is LEEHSQGPHHNDEDASHLPH. 3 stretches are compositionally biased toward polar residues: residues 760–785, 806–817, and 827–840; these read TDSS…QASV, NKPSVVDSNSAE, and SWTS…QMVK. The region spanning 862 to 933 is the GRAM 2 domain; the sequence is RKFRTFFALS…RDLYGLKAQK (72 aa). 10 residues coordinate UDP-alpha-D-glucose: Ser1043, Arg1044, Asp1046, Ile1358, His1360, His1373, Gly1377, Thr1378, Asp1397, and Gln1398. The interval 1499-1552 is disordered; that stretch reads NRVRSRSRSRSRSSQGRFSPRRHTVDDDGWSVVSGGSRSRSGSASAVTSPERRP. Low complexity predominate over residues 1529–1545; that stretch reads SVVSGGSRSRSGSASAV.

The protein belongs to the glycosyltransferase 28 family.

Its subcellular location is the cytoplasm. The protein resides in the membrane. The catalysed reaction is a sterol + UDP-alpha-D-glucose = a sterol 3-beta-D-glucoside + UDP + H(+). It carries out the reaction ergosterol + UDP-alpha-D-glucose = ergosteryl 3-beta-D-glucoside + UDP + H(+). Sterol glycosyltransferase responsible for the glycosylation of ergosterol to form ergosterol-glucoside. The protein is Sterol 3-beta-glucosyltransferase of Cryptococcus neoformans var. neoformans serotype D (strain B-3501A) (Filobasidiella neoformans).